The primary structure comprises 377 residues: MKAMVSNASGGYCLNSAMPQPSPMPGMMLVRVEAVALNPYDTKVIEYGIITPEPYVGGCDFAGVVVAAGPGVTRFQPGDPVLSMHTRGGFAEYALAFEDMSCHIPKGMSYNEACSLGLGIGISGLALFQQPGLNLPLQHGQDLSDMTGNGRSNGYTNGHTNGHTNGHSKGEEEQKDPVIVLVAGGASASGTMATQLLKLAGYNPIVTCSPANNSLCESFGASACFDYNSTTCGADIRLHTDNSLAYVVDCVTNVATMTMCYEAIGTQGGTYIALDATANTVKYTRRDVRADWVMANTLLGEPCKLDGVYGRSSAPEHREFASHFFRLAERWLAEGKIRNHPLEIRTGGLESVDAGLQDLRDGVIRGKKLVVPLHVGA.

In terms of domain architecture, Enoyl reductase (ER) spans 7-370 (NASGGYCLNS…DGVIRGKKLV (364 aa)). The segment at 143–173 (LSDMTGNGRSNGYTNGHTNGHTNGHSKGEEE) is disordered. Polar residues predominate over residues 144-155 (SDMTGNGRSNGY). Residues 156–167 (TNGHTNGHTNGH) are compositionally biased toward low complexity. NADP(+) contacts are provided by residues 186 to 189 (ASAS), 209 to 212 (SPAN), Tyr227, and 274 to 275 (LD).

It belongs to the zinc-containing alcohol dehydrogenase family.

It participates in secondary metabolite biosynthesis. In terms of biological role, trans-enoyl reductase; part of the gene cluster that mediates the biosynthesis of fusamarins, isocoumarin derivatives that show moderate cytotoxicity with IC(50) values between 1 and 50 uM. The polyketide synthase FMN1 probably synthesizes two different polyketides, a tetra- and a pentaketide, containinga varying number of double bonds depending on the selective actions of the trans-enoyl reductase FMN2. Chain fusion will presumably be mediated by the KS domain before finally offloading is catalyzed by the alpha/beta hydrolase fold enzyme FMN3. The chain is Trans-enoyl reductase FMN2 from Fusarium mangiferae (Mango malformation disease fungus).